The chain runs to 653 residues: Serine/threonine-protein phosphatase with EF-hands 1 (653 aa).

Residues 16–45 (SLRAALIIQNWYRGYKARLKARQHYALTIF) form the IQ domain. The catalytic stretch occupies residues 121–455 (IDLLLEAFKE…PRFFQYQVTK (335 aa)). Residues D172, H174, D201, and N233 each coordinate Mn(2+). The active-site Proton donor is the H234. The Mn(2+) site is built by H285 and H403. 3 consecutive EF-hand domains span residues 483 to 518 (SRKS…ILGL), 566 to 601 (RYRS…FSSH), and 606 to 641 (IDDS…VHRY). Residues D579, D581, S583, E590, D619, N621, D623, S625, and E630 each coordinate Ca(2+).

This sequence belongs to the PPP phosphatase family. The cofactor is Mn(2+). Mg(2+) serves as cofactor. In terms of tissue distribution, detected in retina and retinal derived Y-79 retinoblastoma cells. Also found in fetal brain.

It carries out the reaction O-phospho-L-seryl-[protein] + H2O = L-seryl-[protein] + phosphate. The enzyme catalyses O-phospho-L-threonyl-[protein] + H2O = L-threonyl-[protein] + phosphate. Activated by calcium. In terms of biological role, may have a role in the recovery or adaptation response of photoreceptors. May have a role in development. The protein is Serine/threonine-protein phosphatase with EF-hands 1 (PPEF1) of Homo sapiens (Human).